The primary structure comprises 196 residues: MEEEILYKIILVGESGVGKSSILVRFTDNTFSQHFAPTLGVDFNVKTIRNKETGQTVKLQLWDTAGQERFKSITQTFYRGSHGVIVVYDVTDPKSFERCKNWVEDINQYTQDGMIIILVGNKSDMVAQRKVTFEQGQEMAEQLKTKFLEVSAKENNGVTQVFDLLVQDIEATMKNSKVAQNQLNLNSEVGQKRGCC.

13-20 (GESGVGKS) provides a ligand contact to GTP. An Effector region motif is present at residues 35-43 (FAPTLGVDF). GTP is bound by residues 63-67 (DTAGQ) and 121-124 (NKSD). Residues cysteine 195 and cysteine 196 are each lipidated (S-geranylgeranyl cysteine).

The protein belongs to the small GTPase superfamily. Rab family.

Its subcellular location is the cell membrane. In Dictyostelium discoideum (Social amoeba), this protein is Ras-related protein RabC (rabC).